The primary structure comprises 542 residues: Chaperonin GroEL 1 (542 aa).

ATP contacts are provided by residues 29-32 (TLGP), 86-90 (DGTTT), Gly413, 477-479 (NAA), and Asp493.

This sequence belongs to the chaperonin (HSP60) family. As to quaternary structure, forms a cylinder of 14 subunits composed of two heptameric rings stacked back-to-back. Interacts with the co-chaperonin GroES.

The protein resides in the cytoplasm. It catalyses the reaction ATP + H2O + a folded polypeptide = ADP + phosphate + an unfolded polypeptide.. In terms of biological role, together with its co-chaperonin GroES, plays an essential role in assisting protein folding. The GroEL-GroES system forms a nano-cage that allows encapsulation of the non-native substrate proteins and provides a physical environment optimized to promote and accelerate protein folding. This Kineococcus radiotolerans (strain ATCC BAA-149 / DSM 14245 / SRS30216) protein is Chaperonin GroEL 1.